A 427-amino-acid polypeptide reads, in one-letter code: Glucose-6-phosphate isomerase (427 aa).

Glu-277 (proton donor) is an active-site residue. Catalysis depends on residues His-298 and Lys-414.

The protein belongs to the GPI family.

It localises to the cytoplasm. The catalysed reaction is alpha-D-glucose 6-phosphate = beta-D-fructose 6-phosphate. It functions in the pathway carbohydrate biosynthesis; gluconeogenesis. It participates in carbohydrate degradation; glycolysis; D-glyceraldehyde 3-phosphate and glycerone phosphate from D-glucose: step 2/4. Catalyzes the reversible isomerization of glucose-6-phosphate to fructose-6-phosphate. This Mycoplasma capricolum subsp. capricolum (strain California kid / ATCC 27343 / NCTC 10154) protein is Glucose-6-phosphate isomerase.